Here is a 543-residue protein sequence, read N- to C-terminus: Alanine aminotransferase 1, mitochondrial (543 aa).

The N-terminal 55 residues, 1–55 (MRRFVIGQAKNLIDQSRRRQLHHHKNLSFVSLIPPFSAPSDSSSRHLSSSSSSDM), are a transit peptide targeting the mitochondrion. Residues 43 to 63 (SSRHLSSSSSSDMSASDSSSS) are compositionally biased toward low complexity. The interval 43–64 (SSRHLSSSSSSDMSASDSSSSL) is disordered. N-acetylserine is present on serine 56. Residues tyrosine 173, 209 to 210 (AS), tyrosine 235, asparagine 291, tyrosine 322, and 354 to 356 (SFQ) each bind pyridoxal 5'-phosphate. Residue lysine 360 is modified to N6-(pyridoxal phosphate)lysine. Positions 369 and 397 each coordinate pyridoxal 5'-phosphate.

This sequence belongs to the class-I pyridoxal-phosphate-dependent aminotransferase family. Alanine aminotransferase subfamily. In terms of assembly, homodimer. It depends on pyridoxal 5'-phosphate as a cofactor. In terms of processing, the N-terminus is blocked. As to expression, mostly expressed in roots and shoots, mostly in vascular tissues, and, to a lower extent, in flowers and leaves.

The protein localises to the mitochondrion. It catalyses the reaction L-alanine + 2-oxoglutarate = pyruvate + L-glutamate. It participates in photosynthesis; C4 acid pathway. Its pathway is amino-acid degradation; L-alanine degradation via transaminase pathway; pyruvate from L-alanine: step 1/1. In terms of biological role, is the major alanine aminotransferase in roots that catalyzes the conversion of alanine to pyruvate. Involved in the rapid conversion of alanine to pyruvate during recovery from low-oxygen stress. The protein is Alanine aminotransferase 1, mitochondrial of Arabidopsis thaliana (Mouse-ear cress).